Here is a 338-residue protein sequence, read N- to C-terminus: NLP effector protein 6 (338 aa).

Positions 1-19 (MRFTTIFWISLTVLATVRA) are cleaved as a signal peptide. Residues 68-119 (LTLSPSASSPAKRNVTLPPDTTMRPDPRQTEPPTEAPTPASTPAPTPDPGPW) form a disordered region. The N-linked (GlcNAc...) asparagine glycan is linked to Asn81. A compositionally biased stretch (pro residues) spans 101–117 (TEAPTPASTPAPTPDPG). The Conserved undecapeptide motif I signature appears at 205–215 (AIMYSWYFPKD). The Hepta-peptide GHRHDWE motif II motif lies at 222–227 (GHRHDW).

Belongs to the Necrosis inducing protein (NPP1) family.

Its subcellular location is the secreted. Secreted effector that contributes strongly to virulence during infection by P.capsici. Causes large necrotic areas in both host C.annuum and non-host N.benthamiana. The protein is NLP effector protein 6 of Phytophthora capsici.